We begin with the raw amino-acid sequence, 96 residues long: Protein transport protein Sec61 subunit beta (96 aa).

Positions 1–17 (MPGPTPSGTNVGSSGRS) are enriched in polar residues. Positions 1 to 54 (MPGPTPSGTNVGSSGRSPSKAVAARAAGSTVRQRKNASCGTRSAGRTTSAGTGG) are disordered. N-acetylproline is present on proline 2. Residues 2-71 (PGPTPSGTNV…DSPGLKVGPV (70 aa)) lie on the Cytoplasmic side of the membrane. Serine 7 carries the phosphoserine modification. At threonine 9 the chain carries Phosphothreonine. Residues serine 13, serine 14, and serine 17 each carry the phosphoserine modification. The S-palmitoyl cysteine moiety is linked to residue cysteine 39. Over residues 40 to 50 (GTRSAGRTTSA) the composition is skewed to low complexity. Residues 72-91 (PVLVMSLLFIASVFMLHIWG) traverse the membrane as a helical segment. At 92 to 96 (KYTRS) the chain is on the lumenal side.

It belongs to the SEC61-beta family. In terms of assembly, the SEC61 channel-forming translocon complex consists of channel-forming core components SEC61A1, SEC61B and SEC61G and different auxiliary components such as SEC62 and SEC63. The SEC61 channel associates with the multi-pass translocon (MPT) complex. Interacts with TRAM1.

The protein resides in the endoplasmic reticulum membrane. Its function is as follows. Component of SEC61 channel-forming translocon complex that mediates transport of signal peptide-containing precursor polypeptides across the endoplasmic reticulum (ER). Forms a ribosome receptor and a gated pore in the ER membrane, both functions required for cotranslational translocation of nascent polypeptides. The SEC61 channel is also involved in ER membrane insertion of transmembrane proteins: it mediates membrane insertion of the first few transmembrane segments of proteins, while insertion of subsequent transmembrane regions of multi-pass membrane proteins is mediated by the multi-pass translocon (MPT) complex. The SEC61 channel cooperates with the translocating protein TRAM1 to import nascent proteins into the ER. The chain is Protein transport protein Sec61 subunit beta (SEC61B) from Canis lupus familiaris (Dog).